Here is a 314-residue protein sequence, read N- to C-terminus: tRNA dimethylallyltransferase (314 aa).

40–47 is a binding site for ATP; sequence GPTASGKS. 42 to 47 is a substrate binding site; that stretch reads TASGKS.

Belongs to the IPP transferase family. Monomer. It depends on Mg(2+) as a cofactor.

The enzyme catalyses adenosine(37) in tRNA + dimethylallyl diphosphate = N(6)-dimethylallyladenosine(37) in tRNA + diphosphate. Catalyzes the transfer of a dimethylallyl group onto the adenine at position 37 in tRNAs that read codons beginning with uridine, leading to the formation of N6-(dimethylallyl)adenosine (i(6)A). In Cereibacter sphaeroides (strain KD131 / KCTC 12085) (Rhodobacter sphaeroides), this protein is tRNA dimethylallyltransferase.